The chain runs to 417 residues: Multifunctional CCA protein (417 aa).

Gly8 and Arg11 together coordinate ATP. CTP-binding residues include Gly8 and Arg11. Mg(2+)-binding residues include Asp21 and Asp23. 3 residues coordinate ATP: Arg91, Arg137, and Arg140. Residues Arg91, Arg137, and Arg140 each contribute to the CTP site. One can recognise an HD domain in the interval Ser225–Phe326.

The protein belongs to the tRNA nucleotidyltransferase/poly(A) polymerase family. Bacterial CCA-adding enzyme type 1 subfamily. In terms of assembly, monomer. Can also form homodimers and oligomers. It depends on Mg(2+) as a cofactor. Ni(2+) is required as a cofactor.

The catalysed reaction is a tRNA precursor + 2 CTP + ATP = a tRNA with a 3' CCA end + 3 diphosphate. The enzyme catalyses a tRNA with a 3' CCA end + 2 CTP + ATP = a tRNA with a 3' CCACCA end + 3 diphosphate. Catalyzes the addition and repair of the essential 3'-terminal CCA sequence in tRNAs without using a nucleic acid template. Adds these three nucleotides in the order of C, C, and A to the tRNA nucleotide-73, using CTP and ATP as substrates and producing inorganic pyrophosphate. tRNA 3'-terminal CCA addition is required both for tRNA processing and repair. Also involved in tRNA surveillance by mediating tandem CCA addition to generate a CCACCA at the 3' terminus of unstable tRNAs. While stable tRNAs receive only 3'-terminal CCA, unstable tRNAs are marked with CCACCA and rapidly degraded. The polypeptide is Multifunctional CCA protein (Neisseria meningitidis serogroup C (strain 053442)).